The following is an 874-amino-acid chain: DNA mismatch repair protein MutS (874 aa).

630-637 (GPNMAGKS) is a binding site for ATP.

Belongs to the DNA mismatch repair MutS family.

Its function is as follows. This protein is involved in the repair of mismatches in DNA. It is possible that it carries out the mismatch recognition step. This protein has a weak ATPase activity. This chain is DNA mismatch repair protein MutS, found in Chlorobium phaeovibrioides (strain DSM 265 / 1930) (Prosthecochloris vibrioformis (strain DSM 265)).